Here is an 804-residue protein sequence, read N- to C-terminus: Pentatricopeptide repeat-containing protein At4g35130, chloroplastic (804 aa).

The transit peptide at 1–19 directs the protein to the chloroplast; sequence MAATLLSQCYRIYNSDACK. 16 PPR repeats span residues 63-93, 94-128, 129-163, 164-194, 195-229, 230-264, 266-296, 297-332, 333-363, 364-394, 395-429, 430-464, 465-495, 496-530, 531-561, and 567-597; these read NDPA…MNKA, DAFL…GVKA, DTFT…GFVS, DVYV…MPER, DIVS…GFKP, DRFS…RIET, DVMV…MIQR, NIVA…GLQP, DVIT…GFLP, HMVL…MAEK, NVIS…SLVP, DSTT…RYWS, NTII…ILLK, DVVS…RVNP, NKST…MKRE, and GIEH…MPFV. Positions 602–677 are type E motif; the sequence is IWGSLLNASR…TSSRSTVEAK (76 aa). The type E(+) motif stretch occupies residues 678–708; the sequence is GKSHVFTNGDRSHVATNKIYEVLDVVSRMVG. Residues 710 to 804 are type DYW motif; the sequence is EDIYVHCVSR…NGRCSCGNYW (95 aa).

Belongs to the PPR family. PCMP-H subfamily.

The protein resides in the plastid. Its subcellular location is the chloroplast. The sequence is that of Pentatricopeptide repeat-containing protein At4g35130, chloroplastic (PCMP-H27) from Arabidopsis thaliana (Mouse-ear cress).